Reading from the N-terminus, the 184-residue chain is Rubrerythrin-2 (184 aa).

A Ferritin-like diiron domain is found at 2–146 (SVKNAMTADF…DAQDSAKENK (145 aa)). Residues Glu19, Glu52, Glu94, Glu97, Glu128, His131, Cys156, Cys159, Cys171, and Cys174 each coordinate Fe(3+). A Rubredoxin-like domain is found at 151–184 (GKVYICPVCGFTTLDENIEQCPICGVKKDKFQAF).

Fe(3+) is required as a cofactor.

It carries out the reaction H2O2 + NADH + H(+) = NAD(+) + 2 H2O. Its activity is regulated as follows. Rubredoxin (Rd) increases the NADH consumption rate by serving as an intermediary electron-transfer shuttle between NROR and Rbr2. In terms of biological role, functions as the terminal component of an NADH peroxidase (NADH:H(2)O(2) oxidoreductase) when using NADH:rubredoxin oxidoreductase (NROR) as the electron transport intermediary from NADH to Rbr2. The chain is Rubrerythrin-2 (rbr2) from Clostridium acetobutylicum (strain ATCC 824 / DSM 792 / JCM 1419 / IAM 19013 / LMG 5710 / NBRC 13948 / NRRL B-527 / VKM B-1787 / 2291 / W).